The primary structure comprises 226 residues: ATP synthase F(0) complex subunit a (226 aa).

The next 6 membrane-spanning stretches (helical) occupy residues 6-26 (FASF…IVLF), 68-88 (WALM…LGLL), 97-117 (QLSM…ITGF), 138-158 (IPML…ALAV), 164-184 (ITAG…LMSI), and 189-209 (ALIT…VAMI).

The protein belongs to the ATPase A chain family. Component of the ATP synthase complex composed at least of ATP5F1A/subunit alpha, ATP5F1B/subunit beta, ATP5MC1/subunit c (homooctomer), MT-ATP6/subunit a, MT-ATP8/subunit 8, ATP5ME/subunit e, ATP5MF/subunit f, ATP5MG/subunit g, ATP5MK/subunit k, ATP5MJ/subunit j, ATP5F1C/subunit gamma, ATP5F1D/subunit delta, ATP5F1E/subunit epsilon, ATP5PF/subunit F6, ATP5PB/subunit b, ATP5PD/subunit d, ATP5PO/subunit OSCP. ATP synthase complex consists of a soluble F(1) head domain (subunits alpha(3) and beta(3)) - the catalytic core - and a membrane F(0) domain - the membrane proton channel (subunits c, a, 8, e, f, g, k and j). These two domains are linked by a central stalk (subunits gamma, delta, and epsilon) rotating inside the F1 region and a stationary peripheral stalk (subunits F6, b, d, and OSCP). Interacts with DNAJC30; interaction is direct.

It is found in the mitochondrion inner membrane. It carries out the reaction H(+)(in) = H(+)(out). In terms of biological role, subunit a, of the mitochondrial membrane ATP synthase complex (F(1)F(0) ATP synthase or Complex V) that produces ATP from ADP in the presence of a proton gradient across the membrane which is generated by electron transport complexes of the respiratory chain. ATP synthase complex consist of a soluble F(1) head domain - the catalytic core - and a membrane F(1) domain - the membrane proton channel. These two domains are linked by a central stalk rotating inside the F(1) region and a stationary peripheral stalk. During catalysis, ATP synthesis in the catalytic domain of F(1) is coupled via a rotary mechanism of the central stalk subunits to proton translocation. With the subunit c (ATP5MC1), forms the proton-conducting channel in the F(0) domain, that contains two crucial half-channels (inlet and outlet) that facilitate proton movement from the mitochondrial intermembrane space (IMS) into the matrix. Protons are taken up via the inlet half-channel and released through the outlet half-channel, following a Grotthuss mechanism. This is ATP synthase F(0) complex subunit a from Bos indicus (Zebu).